The primary structure comprises 281 residues: MTWKIIADSGCDYRQLPTPAINTTFVSVPLTIQVADQVFVDDASLDIDQMMETMYATAEASKSACPSPDDYLRAFEGAKNIFLVTITGTLSGSHNSAQLAKNIYLEDHPDTKIHVIDSLSAGGEVDLLVEKLNDLIDQGLSFEEVVEAITAYQEKTKLLFVLAKVDNLVKNGRLSKLIGTVVGLLNIRMVGKASETGTLELLQKARGSKKSVQAAYDELVKAGYAGGRIVMAQRNNEKCCQQLSERIRETFPQADIKILPTSGLCSFYAEEGGLLMGYEID.

The DegV domain occupies 3-280 (WKIIADSGCD…EGGLLMGYEI (278 aa)). 2 residues coordinate hexadecanoate: Ser-63 and Ser-91.

Its function is as follows. May bind long-chain fatty acids, such as palmitate, and may play a role in lipid transport or fatty acid metabolism. The polypeptide is DegV domain-containing protein spr0652 (Streptococcus pneumoniae (strain ATCC BAA-255 / R6)).